The sequence spans 379 residues: ATP phosphoribosyltransferase regulatory subunit (379 aa).

This sequence belongs to the class-II aminoacyl-tRNA synthetase family. HisZ subfamily. In terms of assembly, heteromultimer composed of HisG and HisZ subunits.

It is found in the cytoplasm. The protein operates within amino-acid biosynthesis; L-histidine biosynthesis; L-histidine from 5-phospho-alpha-D-ribose 1-diphosphate: step 1/9. In terms of biological role, required for the first step of histidine biosynthesis. May allow the feedback regulation of ATP phosphoribosyltransferase activity by histidine. The sequence is that of ATP phosphoribosyltransferase regulatory subunit from Sinorhizobium fredii (strain NBRC 101917 / NGR234).